Here is a 34-residue protein sequence, read N- to C-terminus: Photosystem II reaction center protein M (34 aa).

A helical transmembrane segment spans residues 7 to 27 (GFIATILFVLVPTVFLLILYI).

This sequence belongs to the PsbM family. In terms of assembly, PSII is composed of 1 copy each of membrane proteins PsbA, PsbB, PsbC, PsbD, PsbE, PsbF, PsbH, PsbI, PsbJ, PsbK, PsbL, PsbM, PsbT, PsbX, PsbY, PsbZ, Psb30/Ycf12, peripheral proteins PsbO, CyanoQ (PsbQ), PsbU, PsbV and a large number of cofactors. It forms dimeric complexes.

It localises to the cellular thylakoid membrane. One of the components of the core complex of photosystem II (PSII). PSII is a light-driven water:plastoquinone oxidoreductase that uses light energy to abstract electrons from H(2)O, generating O(2) and a proton gradient subsequently used for ATP formation. It consists of a core antenna complex that captures photons, and an electron transfer chain that converts photonic excitation into a charge separation. This subunit is found at the monomer-monomer interface. The polypeptide is Photosystem II reaction center protein M (Picosynechococcus sp. (strain ATCC 27264 / PCC 7002 / PR-6) (Agmenellum quadruplicatum)).